A 180-amino-acid polypeptide reads, in one-letter code: ATP-dependent protease subunit HslV (180 aa).

The active site involves T7. Na(+) is bound by residues A162, C165, and T168.

Belongs to the peptidase T1B family. HslV subfamily. As to quaternary structure, a double ring-shaped homohexamer of HslV is capped on each side by a ring-shaped HslU homohexamer. The assembly of the HslU/HslV complex is dependent on binding of ATP.

The protein localises to the cytoplasm. It catalyses the reaction ATP-dependent cleavage of peptide bonds with broad specificity.. Allosterically activated by HslU binding. Protease subunit of a proteasome-like degradation complex believed to be a general protein degrading machinery. In Dichelobacter nodosus (strain VCS1703A), this protein is ATP-dependent protease subunit HslV.